Here is a 525-residue protein sequence, read N- to C-terminus: Histidine-rich glycoprotein (525 aa).

A signal peptide spans 1 to 18 (MKALIAALLLITLQYSCA). 2 Cystatin domains span residues 19–136 (VSPT…SALA) and 137–254 (NTKD…NING). 5 disulfides stabilise this stretch: Cys-24–Cys-504, Cys-78–Cys-89, Cys-105–Cys-126, Cys-203–Cys-417, and Cys-218–Cys-241. The interval 41–84 (RRRDGYLFQLLRIADAHLDRVENTTVYYLVLDVQESDCSVLSRK) is interaction with ATP5F1A. Asn-63 is a glycosylation site (N-linked (GlcNAc...) asparagine). N-linked (GlcNAc...) asparagine glycosylation occurs at Asn-125. The interval 252–407 (INGVPPHLGH…GHHPHGHHPH (156 aa)) is disordered. The segment covering 284–293 (RDHHHPHKPH) has biased composition (basic residues). Residues 310–320 (PPLPQGPPPLL) are compositionally biased toward pro residues. The span at 323–348 (SCSSCQHATFGTNGAQRHSHNNNSSD) shows a compositional bias: polar residues. Residues Asn-344 and Asn-345 are each glycosylated (N-linked (GlcNAc...) asparagine). Positions 348 to 382 (DLHPHKHHSHEQHPHGHHPHAHHPHEHDTHRQHPH) are necessary for endothelial cell focal adhesions and anti-angiogenic activities. 2 stretches are compositionally biased toward basic residues: residues 351–371 (PHKH…AHHP) and 379–407 (QHPH…HHPH).

Interacts (via the HRR domain) with TPM1; the interaction appears to contribute to the antiangiogenic properties of the HRR domain. Interacts with THBS2; the interaction blocks the antiangiogenic effect of THBS2 with CD36. Interacts with THBS1 (via the TSP type I repeats); the interaction blocks the antiangiogenic effect of THBS1 with CD3. Interacts with PLG (via its Kringle domains); the interaction tethers PLG to the cell surface and enhances its activation. Interacts with HPSE; the interaction is enhanced at acidic pH, partially inhibits binding of HPSE to cell surface receptors and modulates its enzymatic activity. Interacts (via the HRR domain) with TMP1; the interaction partially mediates the antiangiogenic properties of HRG. Interacts with kappa and lambda light chains of IgG molecules. Interacts with ATP5F1A; the interaction occurs on the surface of T-cells and alters their cell morphology in concert with CONA. Binds IgG molecules containing kappa and lambda light chains and inhibits the formation of insoluble immunoglobulin complexes. Interacts with F12; the interaction, which is enhanced in the presence of zinc ions and inhibited by heparin-binding to HRG, inhibits factor XII autoactivation and contact-initiated coagulation. The cofactor is Zn(2+). In terms of processing, proteolytic cleavage produces several HRG fragments which are mostly disulfide-linked and, therefore, not released. Cleavage by plasmin is inhibited in the presence of heparin, zinc ions or in an acidic environment. Cleavage reduces binding of HRG to heparan sulfate, but enhances the ability of HRG to bind and tether plasminogen to the cell surface. On platelet activation, releases a 33 kDa antiangiogenic peptide which encompasses the HRR. Also cleaved in the C-terminal by plasmin. Post-translationally, N-glycosylated. As to expression, expressed in macrophages and in malignant cells. Expressed by the liver and secreted in plasma (at protein level).

The protein resides in the secreted. Its function is as follows. Plasma glycoprotein that binds a number of ligands such as heme, heparin, heparan sulfate, thrombospondin, plasminogen, and divalent metal ions. Binds heparin and heparin/glycosaminoglycans in a zinc-dependent manner. Binds heparan sulfate on the surface of liver, lung, kidney and heart endothelial cells. Binds to N-sulfated polysaccharide chains on the surface of liver endothelial cells. Inhibits rosette formation. Acts as an adapter protein and is implicated in regulating many processes such as immune complex and pathogen clearance, cell chemotaxis, cell adhesion, angiogenesis, coagulation and fibrinolysis. Mediates clearance of necrotic cells through enhancing the phagocytosis of necrotic cells in a heparan sulfate-dependent pathway. This process can be regulated by the presence of certain HRG ligands such as heparin and zinc ions. Binds to IgG subclasses of immunoglobins containing kappa and lambda light chains with different affinities regulating their clearance and inhibiting the formation of insoluble immune complexes. Tethers plasminogen to the cell surface. Binds T-cells and alters the cell morphology. Modulates angiogenesis by blocking the CD6-mediated antiangiongenic effect of thrombospondins, THBS1 and THBS2. Acts as a regulator of the vascular endothelial growth factor (VEGF) signaling pathway; inhibits endothelial cell motility by reducing VEGF-induced complex formation between PXN/paxillin and ILK/integrin-linked protein kinase and by promoting inhibition of VEGF-induced tyrosine phosphorylation of focal adhesion kinases and alpha-actinins in endothelial cells. Also plays a role in the regulation of tumor angiogenesis and tumor immune surveillance. Normalizes tumor vessels and promotes antitumor immunity by polarizing tumor-associated macrophages, leading to decreased tumor growth and metastasis. The protein is Histidine-rich glycoprotein (HRG) of Homo sapiens (Human).